The primary structure comprises 572 residues: MADFEELRNMVSSFRVSELQVLLGFAGRNKSGRKHDLLMRALHLLKSGCTPAVQIKIRELYRRRYPRTLEGLSDLSTIKSSVFSLDGSSSPVEPDLAVAGIHSLPSTSIAPHSPSSPVASVLLQDTKPTFEMQQPSPPIPPVHPDVQLKTLPFYDVLDVLIKPTSLVQSSIQRFQEKFFIFALTPQQVREICISRDFLPGGRRDYTVQVQLRLCLAETSCPQEDNYPNSLCIKVNGKLFPLPGYAPPPKNGIEQKRPGRPLNITSLVRLSSAVPNQISISWASEIGKNYSMSVYLVRQLTSAMLLQRLKMKGIRNPDHSRALIKEKLTADPDSEIATTSLRVSLMCPLGKMRLTIPCRAVTCTHLQCFDAALYLQMNEKKPTWICPVCDKKAAYESLILDGLFMEILNDCSDVDEIKFQEDGSWCPMRPKKEAMKVTSQPCTKVESSSVFSKPCSVTVASDASKKKIDVIDLTIESSSDEEEDPPAKRKCIFMSETQSSPTKGVLMYQPSSVRVPSVTSVDPAAIPPSLTDYSVPFHHTPVSSMSSDLPGEQRRNDINNEVQLGTSSDTVQQ.

One can recognise an SAP domain in the interval 11-45 (VSSFRVSELQVLLGFAGRNKSGRKHDLLMRALHLL). The short motif at 19–23 (LQVLL) is the LXXLL motif element. Glycyl lysine isopeptide (Lys-Gly) (interchain with G-Cter in SUMO2) cross-links involve residues Lys46 and Lys249. A PINIT domain is found at 134–299 (QPSPPIPPVH…SMSVYLVRQL (166 aa)). The segment at 331–412 (PDSEIATTSL…FMEILNDCSD (82 aa)) adopts an SP-RING-type zinc-finger fold. Zn(2+)-binding residues include Cys362, His364, Cys385, and Cys388. Residues Lys430, Lys435, Lys443, and Lys452 each participate in a glycyl lysine isopeptide (Lys-Gly) (interchain with G-Cter in SUMO2) cross-link. The segment at 467–473 (IDVIDLT) is SUMO1-binding. Phosphoserine is present on residues Ser476, Ser477, and Ser478. The Nuclear localization signal motif lies at 484–492 (PPAKRKCIF). A Glycyl lysine isopeptide (Lys-Gly) (interchain with G-Cter in SUMO2) cross-link involves residue Lys489. At Ser499 the chain carries Phosphoserine. A Glycyl lysine isopeptide (Lys-Gly) (interchain with G-Cter in SUMO2) cross-link involves residue Lys502. A disordered region spans residues 523 to 572 (AAIPPSLTDYSVPFHHTPVSSMSSDLPGEQRRNDINNEVQLGTSSDTVQQ). Over residues 558-572 (NNEVQLGTSSDTVQQ) the composition is skewed to polar residues.

This sequence belongs to the PIAS family. Binds SUMO1 and UBE2I. Interacts with AXIN1, JUN, MDM2, PARK7, TP53 and TP73 isoform alpha, but not TP73 isoform beta. Interacts with STAT4 following IL12 and IFN-alpha stimulation of T-cells. Interacts also with GTF2I, GTF2IRD1, IKFZ1, DAB2 and MSX2, as well as with several steroid receptors, including ESR1, ESR2, NR3C1, PGR, AR, and with NCOA2. Sumoylation of a target protein seems to enhance the interaction. Binds to sumoylated ELK1. Binds DNA, such as CDKN1A promoter, in a sequence-specific manner. Interacts with PLAG1. Interacts with KLF8; the interaction results in SUMO ligation and repression of KLF8 transcriptional activity and of its cell cycle progression into G(1) phase. Interacts with IFIH1/MDA5. Interacts with PML. Interacts with PRDM1. Post-translationally, sumoylated. Mainly expressed in testis.

It localises to the nucleus speckle. It is found in the nucleus. The protein resides in the PML body. The protein operates within protein modification; protein sumoylation. In terms of biological role, functions as an E3-type small ubiquitin-like modifier (SUMO) ligase, stabilizing the interaction between UBE2I and the substrate, and as a SUMO-tethering factor. Plays a crucial role as a transcriptional coregulation in various cellular pathways, including the STAT pathway, the p53 pathway and the steroid hormone signaling pathway. The effects of this transcriptional coregulation, transactivation or silencing may vary depending upon the biological context and PIAS2 isoform studied. However, it seems to be mostly involved in gene silencing. Binds to sumoylated ELK1 and enhances its transcriptional activity by preventing recruitment of HDAC2 by ELK1, thus reversing SUMO-mediated repression of ELK1 transactivation activity. Sumoylates PML at'Lys-65' and 'Lys-160'. The chain is E3 SUMO-protein ligase PIAS2 (Pias2) from Rattus norvegicus (Rat).